The following is a 620-amino-acid chain: 1-deoxy-D-xylulose-5-phosphate synthase (620 aa).

Thiamine diphosphate is bound by residues His80 and 121-123 (GHS). Asp152 lines the Mg(2+) pocket. Residues 153-154 (GA), Asn181, Tyr288, and Glu370 each bind thiamine diphosphate. Asn181 provides a ligand contact to Mg(2+).

This sequence belongs to the transketolase family. DXPS subfamily. As to quaternary structure, homodimer. The cofactor is Mg(2+). Thiamine diphosphate serves as cofactor.

It catalyses the reaction D-glyceraldehyde 3-phosphate + pyruvate + H(+) = 1-deoxy-D-xylulose 5-phosphate + CO2. Its pathway is metabolic intermediate biosynthesis; 1-deoxy-D-xylulose 5-phosphate biosynthesis; 1-deoxy-D-xylulose 5-phosphate from D-glyceraldehyde 3-phosphate and pyruvate: step 1/1. In terms of biological role, catalyzes the acyloin condensation reaction between C atoms 2 and 3 of pyruvate and glyceraldehyde 3-phosphate to yield 1-deoxy-D-xylulose-5-phosphate (DXP). This Enterobacter sp. (strain 638) protein is 1-deoxy-D-xylulose-5-phosphate synthase.